A 312-amino-acid polypeptide reads, in one-letter code: Isethionate sulfite-lyase activating enzyme (312 aa).

Residues 22–309 form the Radical SAM core domain; sequence HDGPGIRTIV…VDETRGAVTE (288 aa). [4Fe-4S] cluster contacts are provided by cysteine 36, cysteine 40, cysteine 43, cysteine 62, cysteine 65, cysteine 68, cysteine 72, cysteine 92, cysteine 95, cysteine 100, and cysteine 104. 42–44 lines the S-adenosyl-L-methionine pocket; that stretch reads WCS. 2 consecutive 4Fe-4S ferredoxin-type domains span residues 53-82 and 83-115; these read PQVA…VNED and GTLS…YGEN. S-adenosyl-L-methionine contacts are provided by residues glycine 144, 193-195, and histidine 267; that span reads DVK.

Belongs to the organic radical-activating enzymes family. As to quaternary structure, monomer. It depends on [4Fe-4S] cluster as a cofactor.

The enzyme catalyses glycyl-[protein] + reduced [flavodoxin] + S-adenosyl-L-methionine = glycin-2-yl radical-[protein] + semiquinone [flavodoxin] + 5'-deoxyadenosine + L-methionine + H(+). It participates in organosulfur degradation; alkanesulfonate degradation. In terms of biological role, involved in an anaerobic respiration pathway that converts the sulfonate taurine (2-aminoethanesulfonate) to ammonia, acetate and sulfide. Catalyzes activation of the isethionate sulfite-lyase IslA under anaerobic conditions by generation of an organic free radical on a glycine residue, via a homolytic cleavage of S-adenosyl-L-methionine (SAM). This chain is Isethionate sulfite-lyase activating enzyme, found in Bilophila wadsworthia (strain 3_1_6).